We begin with the raw amino-acid sequence, 709 residues long: Acyl-coenzyme A oxidase 4 (709 aa).

Residues 1-12 (MTFTKKNVSVSQ) show a composition bias toward polar residues. Positions 1–29 (MTFTKKNVSVSQGPDPRSSIQKERDSSKW) are disordered.

The protein belongs to the acyl-CoA oxidase family. In terms of assembly, homooctamer. Requires FAD as cofactor.

Its subcellular location is the peroxisome. The catalysed reaction is a 2,3-saturated acyl-CoA + O2 = a (2E)-enoyl-CoA + H2O2. It participates in lipid metabolism; peroxisomal fatty acid beta-oxidation. This chain is Acyl-coenzyme A oxidase 4 (POX4), found in Candida tropicalis (Yeast).